Consider the following 556-residue polypeptide: 2-succinyl-5-enolpyruvyl-6-hydroxy-3-cyclohexene-1-carboxylate synthase (556 aa).

This sequence belongs to the TPP enzyme family. MenD subfamily. In terms of assembly, homodimer. The cofactor is Mg(2+). It depends on Mn(2+) as a cofactor. Thiamine diphosphate is required as a cofactor.

The catalysed reaction is isochorismate + 2-oxoglutarate + H(+) = 5-enolpyruvoyl-6-hydroxy-2-succinyl-cyclohex-3-ene-1-carboxylate + CO2. Its pathway is quinol/quinone metabolism; 1,4-dihydroxy-2-naphthoate biosynthesis; 1,4-dihydroxy-2-naphthoate from chorismate: step 2/7. It functions in the pathway quinol/quinone metabolism; menaquinone biosynthesis. Functionally, catalyzes the thiamine diphosphate-dependent decarboxylation of 2-oxoglutarate and the subsequent addition of the resulting succinic semialdehyde-thiamine pyrophosphate anion to isochorismate to yield 2-succinyl-5-enolpyruvyl-6-hydroxy-3-cyclohexene-1-carboxylate (SEPHCHC). This is 2-succinyl-5-enolpyruvyl-6-hydroxy-3-cyclohexene-1-carboxylate synthase from Salmonella arizonae (strain ATCC BAA-731 / CDC346-86 / RSK2980).